Consider the following 176-residue polypeptide: MDQLKYPIGTFSKPLEADERELEKWIGDLKQAPHLLRSAAAELNEEQLDTPYRTGGWAVRQVVHHLADSHMNGYIRSKLALTEETPLIRTFDEQNWAGLTDARTLDPDLSLALLDTLHLRWAALXESLTEADFEKAYIYPGTGEEMKLYQALALYVWHSQHHIAHIKAHRKRMGWN.

The Zn(2+) site is built by H65, H158, and H162.

It belongs to the metal hydrolase YfiT family. In terms of assembly, homodimer. Zn(2+) is required as a cofactor.

It localises to the cytoplasm. Its function is as follows. Possible metal-dependent hydrolase. The protein is Putative metal-dependent hydrolase BLi00869/BLi00870/BL03027 of Bacillus licheniformis (strain ATCC 14580 / DSM 13 / JCM 2505 / CCUG 7422 / NBRC 12200 / NCIMB 9375 / NCTC 10341 / NRRL NRS-1264 / Gibson 46).